The following is a 295-amino-acid chain: Aspartate carbamoyltransferase catalytic subunit (295 aa).

Residues Arg-49 and Thr-50 each coordinate carbamoyl phosphate. Lys-77 is an L-aspartate binding site. 3 residues coordinate carbamoyl phosphate: Arg-99, His-127, and Gln-130. The L-aspartate site is built by Arg-161 and Arg-212. 2 residues coordinate carbamoyl phosphate: Gly-251 and Pro-252.

This sequence belongs to the aspartate/ornithine carbamoyltransferase superfamily. ATCase family. In terms of assembly, heterododecamer (2C3:3R2) of six catalytic PyrB chains organized as two trimers (C3), and six regulatory PyrI chains organized as three dimers (R2).

It carries out the reaction carbamoyl phosphate + L-aspartate = N-carbamoyl-L-aspartate + phosphate + H(+). It participates in pyrimidine metabolism; UMP biosynthesis via de novo pathway; (S)-dihydroorotate from bicarbonate: step 2/3. Its function is as follows. Catalyzes the condensation of carbamoyl phosphate and aspartate to form carbamoyl aspartate and inorganic phosphate, the committed step in the de novo pyrimidine nucleotide biosynthesis pathway. The chain is Aspartate carbamoyltransferase catalytic subunit from Campylobacter jejuni subsp. jejuni serotype O:6 (strain 81116 / NCTC 11828).